Here is a 203-residue protein sequence, read N- to C-terminus: Small ribosomal subunit protein uS5 (203 aa).

Residues 49–112 (FEERVVKIKR…KNANNNLIKV (64 aa)) form the S5 DRBM domain.

It belongs to the universal ribosomal protein uS5 family. As to quaternary structure, part of the 30S ribosomal subunit. Contacts proteins S4 and S8.

In terms of biological role, with S4 and S12 plays an important role in translational accuracy. Its function is as follows. Located at the back of the 30S subunit body where it stabilizes the conformation of the head with respect to the body. This Ureaplasma parvum serovar 3 (strain ATCC 700970) protein is Small ribosomal subunit protein uS5.